Here is a 466-residue protein sequence, read N- to C-terminus: Cytochrome b561 and DOMON domain-containing protein At3g59070 (466 aa).

A signal peptide spans 1-25; sequence MSLSSRATLVVLCCLFMLIPSFTTA. The region spanning 57–172 is the DOMON domain; the sequence is LNSYLHFNYA…TVVNHLWQDG (116 aa). Positions 179–380 constitute a Cytochrome b561 domain; the sequence is RLGMHAMSGD…MEILQFKKRW (202 aa). Helical transmembrane passes span 219–239, 252–272, and 287–307; these read IHAI…VMAA, WFYI…IGGL, and TLHT…ILSL. Residues His220, His256, His289, and His325 each coordinate heme b. A run of 2 helical transmembrane segments spans residues 327–347 and 355–375; these read TMGY…LSIL and IAYT…EILQ.

It depends on heme b as a cofactor.

The protein localises to the membrane. Functionally, may act as a catecholamine-responsive trans-membrane electron transporter. The protein is Cytochrome b561 and DOMON domain-containing protein At3g59070 of Arabidopsis thaliana (Mouse-ear cress).